Consider the following 298-residue polypeptide: tRNA dimethylallyltransferase (298 aa).

12-19 (GPTASGKT) contributes to the ATP binding site. 14–19 (TASGKT) is a binding site for substrate. An interaction with substrate tRNA region spans residues 37 to 40 (DSRQ).

The protein belongs to the IPP transferase family. Monomer. Requires Mg(2+) as cofactor.

The catalysed reaction is adenosine(37) in tRNA + dimethylallyl diphosphate = N(6)-dimethylallyladenosine(37) in tRNA + diphosphate. In terms of biological role, catalyzes the transfer of a dimethylallyl group onto the adenine at position 37 in tRNAs that read codons beginning with uridine, leading to the formation of N6-(dimethylallyl)adenosine (i(6)A). The protein is tRNA dimethylallyltransferase of Synechococcus sp. (strain CC9902).